Consider the following 378-residue polypeptide: Queuine tRNA-ribosyltransferase (378 aa).

Aspartate 93 (proton acceptor) is an active-site residue. Substrate is bound by residues 93–97, aspartate 147, glutamine 189, and glycine 216; that span reads DSGGF. The tract at residues 247-253 is RNA binding; that stretch reads GVGTFRE. Aspartate 266 functions as the Nucleophile in the catalytic mechanism. An RNA binding; important for wobble base 34 recognition region spans residues 271-275; sequence TRVAR. Residues cysteine 308, cysteine 310, cysteine 313, and histidine 339 each coordinate Zn(2+).

Belongs to the queuine tRNA-ribosyltransferase family. Homodimer. Within each dimer, one monomer is responsible for RNA recognition and catalysis, while the other monomer binds to the replacement base PreQ1. Zn(2+) is required as a cofactor.

It catalyses the reaction 7-aminomethyl-7-carbaguanine + guanosine(34) in tRNA = 7-aminomethyl-7-carbaguanosine(34) in tRNA + guanine. It functions in the pathway tRNA modification; tRNA-queuosine biosynthesis. Catalyzes the base-exchange of a guanine (G) residue with the queuine precursor 7-aminomethyl-7-deazaguanine (PreQ1) at position 34 (anticodon wobble position) in tRNAs with GU(N) anticodons (tRNA-Asp, -Asn, -His and -Tyr). Catalysis occurs through a double-displacement mechanism. The nucleophile active site attacks the C1' of nucleotide 34 to detach the guanine base from the RNA, forming a covalent enzyme-RNA intermediate. The proton acceptor active site deprotonates the incoming PreQ1, allowing a nucleophilic attack on the C1' of the ribose to form the product. After dissociation, two additional enzymatic reactions on the tRNA convert PreQ1 to queuine (Q), resulting in the hypermodified nucleoside queuosine (7-(((4,5-cis-dihydroxy-2-cyclopenten-1-yl)amino)methyl)-7-deazaguanosine). This chain is Queuine tRNA-ribosyltransferase, found in Gloeobacter violaceus (strain ATCC 29082 / PCC 7421).